Consider the following 202-residue polypeptide: Cytochrome c oxidase assembly protein CtaG (202 aa).

Over 1-14 (MSENAGTPKKQGRN) the chain is Cytoplasmic. A helical; Signal-anchor for type II membrane protein membrane pass occupies residues 15–37 (NGAVVMMCLSFVFGMGAMSYAAV). Residues 38–202 (PLYRIFCQVT…GGAEKIEKKL (165 aa)) lie on the Periplasmic side of the membrane.

The protein belongs to the COX11/CtaG family.

Its subcellular location is the cell inner membrane. Exerts its effect at some terminal stage of cytochrome c oxidase synthesis, probably by being involved in the insertion of the copper B into subunit I. The polypeptide is Cytochrome c oxidase assembly protein CtaG (Rhizobium johnstonii (strain DSM 114642 / LMG 32736 / 3841) (Rhizobium leguminosarum bv. viciae)).